The primary structure comprises 377 residues: Virion membrane protein OPG143 (377 aa).

A lipid anchor (N-myristoyl glycine; by host) is attached at Gly-2. The Virion surface portion of the chain corresponds to 2–342 (GAAVTLNRIK…VKDKIKLPTW (341 aa)). Residues 343–363 (LGAAITLVVISVIFYFISIYS) form a helical; Signal-anchor for type II membrane protein membrane-spanning segment. Residues 364-377 (RPKIKTNDINVRRR) are Intravirion-facing.

The protein belongs to the orthopoxvirus OPG143 family. In terms of assembly, part of a stable entry-fusion complex (EFC) which is at least composed of proteins OPG143, OPG147, OPG155, OPG086, OPG094, OPG107, OPG104, and OPG099. Formation of the viral membrane is necessary for the assembly of the complex. Interacts with OPG094. Interacts with OPG153. Post-translationally, most cysteines are linked by disulfide bonds. They are created by the viral disulfide bond formation pathway, a poxvirus-specific redox pathway that operates on the cytoplasmic side of the MV membranes.

Its subcellular location is the virion membrane. Functionally, envelope protein part of the entry-fusion complex responsible for the virus membrane fusion with host cell membrane during virus entry. Also plays a role in cell-cell fusion (syncytium formation). The chain is Virion membrane protein OPG143 (OPG143) from Vaccinia virus (strain Western Reserve) (VACV).